Consider the following 86-residue polypeptide: Small ribosomal subunit protein bS20 (86 aa).

It belongs to the bacterial ribosomal protein bS20 family.

Its function is as follows. Binds directly to 16S ribosomal RNA. The protein is Small ribosomal subunit protein bS20 of Mycolicibacterium vanbaalenii (strain DSM 7251 / JCM 13017 / BCRC 16820 / KCTC 9966 / NRRL B-24157 / PYR-1) (Mycobacterium vanbaalenii).